We begin with the raw amino-acid sequence, 61 residues long: MQSMICSSEHENLTCKYWPVSFLASWCENGSGTLMQKDGSLLYAVKNFSHIFEKKIFHTNL.

This is an uncharacterized protein from Saccharomyces cerevisiae (strain ATCC 204508 / S288c) (Baker's yeast).